We begin with the raw amino-acid sequence, 578 residues long: Arginine--tRNA ligase (578 aa).

A 'HIGH' region motif is present at residues 122–132 (PNVAKEMHVGH).

This sequence belongs to the class-I aminoacyl-tRNA synthetase family. As to quaternary structure, monomer.

Its subcellular location is the cytoplasm. It carries out the reaction tRNA(Arg) + L-arginine + ATP = L-arginyl-tRNA(Arg) + AMP + diphosphate. This Shigella sonnei (strain Ss046) protein is Arginine--tRNA ligase.